A 153-amino-acid chain; its full sequence is Ribonuclease 2 (153 aa).

The protein belongs to the BetVI family.

It is found in the cytoplasm. In terms of biological role, catalyzes the two-stage endonucleolytic cleavage to 3'-phosphomononucleotides and 3'-phosphooligonucleotides with 2',3'-cyclic phosphate intermediates. This chain is Ribonuclease 2, found in Panax ginseng (Korean ginseng).